The sequence spans 347 residues: Ribosomal RNA small subunit methyltransferase C (347 aa).

It belongs to the methyltransferase superfamily. RsmC family. Monomer.

Its subcellular location is the cytoplasm. The catalysed reaction is guanosine(1207) in 16S rRNA + S-adenosyl-L-methionine = N(2)-methylguanosine(1207) in 16S rRNA + S-adenosyl-L-homocysteine + H(+). In terms of biological role, specifically methylates the guanine in position 1207 of 16S rRNA in the 30S particle. This chain is Ribosomal RNA small subunit methyltransferase C, found in Shewanella putrefaciens (strain CN-32 / ATCC BAA-453).